A 428-amino-acid polypeptide reads, in one-letter code: Putative UDP-glucose 6-dehydrogenase YtcA (428 aa).

The first 23 residues, 1-23 (MKICVVGAGYVGLTLSAALASIG), serve as a signal peptide directing secretion. Residues 2–19 (KICV…SAAL), valine 11, aspartate 30, lysine 35, threonine 118, and glutamate 152 contribute to the NAD(+) site. Residues 148–152 (EFLRE), lysine 203, asparagine 207, 248–252 (FLQAG), and glycine 256 each bind substrate. Residue cysteine 259 is the Nucleophile of the active site. Lysine 262 serves as a coordination point for NAD(+). Lysine 319 provides a ligand contact to substrate. Arginine 326 serves as a coordination point for NAD(+).

The protein belongs to the UDP-glucose/GDP-mannose dehydrogenase family.

The catalysed reaction is UDP-alpha-D-glucose + 2 NAD(+) + H2O = UDP-alpha-D-glucuronate + 2 NADH + 3 H(+). It participates in nucleotide-sugar biosynthesis; UDP-alpha-D-glucuronate biosynthesis; UDP-alpha-D-glucuronate from UDP-alpha-D-glucose: step 1/1. Functionally, catalyzes the conversion of UDP-glucose into UDP-glucuronate, one of the precursors of teichuronic acid. This Bacillus subtilis (strain 168) protein is Putative UDP-glucose 6-dehydrogenase YtcA (ytcA).